The following is an 82-amino-acid chain: Envelope small membrane protein (82 aa).

Topologically, residues 1-16 (MLPFVQEQIGAFIVNF) are virion surface. Residues 17–37 (FILSVVCAVTLVVCLAILTAI) form a helical membrane-spanning segment. Topologically, residues 38–78 (RLCVQCVSGCHTLVFLPAVHIYNTGRAAYVKFQESHPPYPP) are intravirion.

It belongs to the betacoronaviruses E protein family. As to quaternary structure, homopentamer. Interacts with membrane protein M in the budding compartment of the host cell, which is located between endoplasmic reticulum and the Golgi complex. Interacts with Nucleoprotein.

The protein resides in the host Golgi apparatus membrane. In terms of biological role, plays a central role in virus morphogenesis and assembly. Acts as a viroporin and self-assembles in host membranes forming pentameric protein-lipid pores that allow ion transport. Also plays a role in the induction of apoptosis. The protein is Envelope small membrane protein of Pipistrellus abramus (Japanese pipistrelle).